The sequence spans 938 residues: Isoleucine--tRNA ligase (938 aa).

Residues 58–68 (PYANGNIHIGH) carry the 'HIGH' region motif. Residue Glu562 participates in L-isoleucyl-5'-AMP binding. Positions 603–607 (KMSKS) match the 'KMSKS' region motif. ATP is bound at residue Lys606. Cys901, Cys904, Cys921, and Cys924 together coordinate Zn(2+).

Belongs to the class-I aminoacyl-tRNA synthetase family. IleS type 1 subfamily. In terms of assembly, monomer. The cofactor is Zn(2+).

Its subcellular location is the cytoplasm. It catalyses the reaction tRNA(Ile) + L-isoleucine + ATP = L-isoleucyl-tRNA(Ile) + AMP + diphosphate. Its function is as follows. Catalyzes the attachment of isoleucine to tRNA(Ile). As IleRS can inadvertently accommodate and process structurally similar amino acids such as valine, to avoid such errors it has two additional distinct tRNA(Ile)-dependent editing activities. One activity is designated as 'pretransfer' editing and involves the hydrolysis of activated Val-AMP. The other activity is designated 'posttransfer' editing and involves deacylation of mischarged Val-tRNA(Ile). In Actinobacillus pleuropneumoniae serotype 7 (strain AP76), this protein is Isoleucine--tRNA ligase.